Reading from the N-terminus, the 376-residue chain is Probable ATP-dependent RNA helicase YfmL (376 aa).

Residues 35–205 enclose the Helicase ATP-binding domain; that stretch reads AQLIMDGKDV…RELAQEPEVL (171 aa). 48 to 55 contacts ATP; it reads SPTGTGKT. The DEAD box motif lies at 153-156; sequence DETD. Positions 231 to 374 constitute a Helicase C-terminal domain; sequence KLLQKLSRLE…EAVYAGGKLK (144 aa).

Belongs to the DEAD box helicase family.

The enzyme catalyses ATP + H2O = ADP + phosphate + H(+). In terms of biological role, a probable DEAD-box RNA helicase that plays a role in ribosomal 50S subunit assembly. May be a non-specific RNA helicase. The protein is Probable ATP-dependent RNA helicase YfmL (yfmL) of Bacillus subtilis (strain 168).